We begin with the raw amino-acid sequence, 31 residues long: Dermaseptin-7.2TR (31 aa).

Glu-31 is subject to Glutamic acid 1-amide.

In terms of tissue distribution, expressed by the skin glands.

It is found in the secreted. Functionally, has antimicrobial activity. The protein is Dermaseptin-7.2TR of Phyllomedusa trinitatis (Trinidad leaf frog).